The following is a 357-amino-acid chain: Biotin synthase (357 aa).

The region spanning 41-268 (NEVQISRLLS…KSRVRLSAGR (228 aa)) is the Radical SAM core domain. Residues Cys-56, Cys-60, and Cys-63 each coordinate [4Fe-4S] cluster. 4 residues coordinate [2Fe-2S] cluster: Cys-100, Cys-131, Cys-191, and Arg-263.

The protein belongs to the radical SAM superfamily. Biotin synthase family. In terms of assembly, homodimer. It depends on [4Fe-4S] cluster as a cofactor. [2Fe-2S] cluster is required as a cofactor.

It carries out the reaction (4R,5S)-dethiobiotin + (sulfur carrier)-SH + 2 reduced [2Fe-2S]-[ferredoxin] + 2 S-adenosyl-L-methionine = (sulfur carrier)-H + biotin + 2 5'-deoxyadenosine + 2 L-methionine + 2 oxidized [2Fe-2S]-[ferredoxin]. It participates in cofactor biosynthesis; biotin biosynthesis; biotin from 7,8-diaminononanoate: step 2/2. Its function is as follows. Catalyzes the conversion of dethiobiotin (DTB) to biotin by the insertion of a sulfur atom into dethiobiotin via a radical-based mechanism. This is Biotin synthase from Shewanella denitrificans (strain OS217 / ATCC BAA-1090 / DSM 15013).